Here is a 287-residue protein sequence, read N- to C-terminus: 4-hydroxybenzoate octaprenyltransferase (287 aa).

A run of 6 helical transmembrane segments spans residues 41–61, 92–112, 133–153, 160–180, 197–217, and 267–287; these read VSLL…GCAI, VALA…LNAL, FFAI…PMAF, VPLL…AYDT, TSAL…YAVT, and NNWL…AQAF.

This sequence belongs to the UbiA prenyltransferase family. Requires Mg(2+) as cofactor.

The protein resides in the cell inner membrane. It catalyses the reaction all-trans-octaprenyl diphosphate + 4-hydroxybenzoate = 4-hydroxy-3-(all-trans-octaprenyl)benzoate + diphosphate. It functions in the pathway cofactor biosynthesis; ubiquinone biosynthesis. Its function is as follows. Catalyzes the prenylation of para-hydroxybenzoate (PHB) with an all-trans polyprenyl group. Mediates the second step in the final reaction sequence of ubiquinone-8 (UQ-8) biosynthesis, which is the condensation of the polyisoprenoid side chain with PHB, generating the first membrane-bound Q intermediate 3-octaprenyl-4-hydroxybenzoate. This Paraburkholderia phymatum (strain DSM 17167 / CIP 108236 / LMG 21445 / STM815) (Burkholderia phymatum) protein is 4-hydroxybenzoate octaprenyltransferase.